The chain runs to 337 residues: Endochitinase 37 (337 aa).

The N-terminal stretch at 1–25 (MTRLLDASFLLLPVIASTLFGTASA) is a signal peptide. The region spanning 38 to 337 (KVLQGYWENW…GSKNWTFGDN (300 aa)) is the GH18 domain. The active-site Proton donor is the E160. N331 is a glycosylation site (N-linked (GlcNAc...) asparagine).

The protein belongs to the glycosyl hydrolase 18 family. Chitinase class V subfamily. As to quaternary structure, monomer.

The protein localises to the secreted. The enzyme catalyses Random endo-hydrolysis of N-acetyl-beta-D-glucosaminide (1-&gt;4)-beta-linkages in chitin and chitodextrins.. Functionally, secreted chitinase involved in the degradation of chitin, a component of the cell walls of fungi and exoskeletal elements of some animals (including worms and arthropods). Plays a morphogenetic role during apical growth, cell division and differentiation (cell wall morphogenesis). May be involved in the degradation and further assimilation of phytopathogenic fungi, namely mycoparasitism, the major mechanism accounting for the antagonistic activity against phytopathogenic fungi displayed by Trichoderma. The chain is Endochitinase 37 (chit37) from Trichoderma harzianum (Hypocrea lixii).